The primary structure comprises 93 residues: CRISPR-associated endoribonuclease Cas2 (93 aa).

Mg(2+) is bound at residue aspartate 8.

The protein belongs to the CRISPR-associated endoribonuclease Cas2 protein family. As to quaternary structure, homodimer, forms a heterotetramer with a Cas1 homodimer. Mg(2+) is required as a cofactor.

Functionally, CRISPR (clustered regularly interspaced short palindromic repeat), is an adaptive immune system that provides protection against mobile genetic elements (viruses, transposable elements and conjugative plasmids). CRISPR clusters contain sequences complementary to antecedent mobile elements and target invading nucleic acids. CRISPR clusters are transcribed and processed into CRISPR RNA (crRNA). Functions as a ssRNA-specific endoribonuclease. Involved in the integration of spacer DNA into the CRISPR cassette. The polypeptide is CRISPR-associated endoribonuclease Cas2 (Thermofilum pendens (strain DSM 2475 / Hrk 5)).